The sequence spans 360 residues: Protein NDRG2 (360 aa).

The interval 325–360 (RTASLSSEGNRSRSRTLSQSSESGGGPPAPLAEVTC) is disordered.

This sequence belongs to the NDRG family.

The protein localises to the cytoplasm. Functionally, contributes to the regulation of the Wnt signaling pathway. Down-regulates CTNNB1-mediated transcriptional activation of target genes. May be involved in neuron differentiation. This is Protein NDRG2 from Xenopus tropicalis (Western clawed frog).